The following is a 444-amino-acid chain: Tol-Pal system protein TolB (444 aa).

Residues 1 to 26 (MTLFRTLAPMGLALALLLPAAVPAAA) form the signal peptide. A compositionally biased stretch (polar residues) spans 281–310 (IYTLDTGSGTRRQLTNSPSIETAPSYSPDG). Residues 281–311 (IYTLDTGSGTRRQLTNSPSIETAPSYSPDGS) form a disordered region.

Belongs to the TolB family. As to quaternary structure, the Tol-Pal system is composed of five core proteins: the inner membrane proteins TolA, TolQ and TolR, the periplasmic protein TolB and the outer membrane protein Pal. They form a network linking the inner and outer membranes and the peptidoglycan layer.

Its subcellular location is the periplasm. Functionally, part of the Tol-Pal system, which plays a role in outer membrane invagination during cell division and is important for maintaining outer membrane integrity. The polypeptide is Tol-Pal system protein TolB (Cereibacter sphaeroides (strain ATCC 17029 / ATH 2.4.9) (Rhodobacter sphaeroides)).